A 256-amino-acid chain; its full sequence is Hydroxyacylglutathione hydrolase (256 aa).

The Zn(2+) site is built by His-57, His-59, Asp-61, His-62, His-115, Asp-134, and His-172.

The protein belongs to the metallo-beta-lactamase superfamily. Glyoxalase II family. As to quaternary structure, monomer. Zn(2+) is required as a cofactor.

It carries out the reaction an S-(2-hydroxyacyl)glutathione + H2O = a 2-hydroxy carboxylate + glutathione + H(+). The protein operates within secondary metabolite metabolism; methylglyoxal degradation; (R)-lactate from methylglyoxal: step 2/2. Its function is as follows. Thiolesterase that catalyzes the hydrolysis of S-D-lactoyl-glutathione to form glutathione and D-lactic acid. This chain is Hydroxyacylglutathione hydrolase, found in Rhizobium johnstonii (strain DSM 114642 / LMG 32736 / 3841) (Rhizobium leguminosarum bv. viciae).